A 368-amino-acid chain; its full sequence is Homoserine O-acetyltransferase (368 aa).

One can recognise an AB hydrolase-1 domain in the interval 47–349 (NAILICHALS…SGEGHDSFLL (303 aa)). The active-site Nucleophile is the Ser153. Arg221 is a substrate binding site. Residues Asp311 and His344 contribute to the active site. Substrate is bound at residue Asp345.

Belongs to the AB hydrolase superfamily. MetX family. As to quaternary structure, homodimer.

The protein resides in the cytoplasm. The enzyme catalyses L-homoserine + acetyl-CoA = O-acetyl-L-homoserine + CoA. It participates in amino-acid biosynthesis; L-methionine biosynthesis via de novo pathway; O-acetyl-L-homoserine from L-homoserine: step 1/1. Its function is as follows. Transfers an acetyl group from acetyl-CoA to L-homoserine, forming acetyl-L-homoserine. The chain is Homoserine O-acetyltransferase from Leptospira borgpetersenii serovar Hardjo-bovis (strain JB197).